The following is a 103-amino-acid chain: Small ribosomal subunit protein uS10 (103 aa).

This sequence belongs to the universal ribosomal protein uS10 family. Part of the 30S ribosomal subunit.

Functionally, involved in the binding of tRNA to the ribosomes. The chain is Small ribosomal subunit protein uS10 from Xanthomonas axonopodis pv. citri (strain 306).